The following is a 118-amino-acid chain: UPF0102 protein Swit_0572 (118 aa).

This sequence belongs to the UPF0102 family.

The polypeptide is UPF0102 protein Swit_0572 (Rhizorhabdus wittichii (strain DSM 6014 / CCUG 31198 / JCM 15750 / NBRC 105917 / EY 4224 / RW1) (Sphingomonas wittichii)).